Consider the following 403-residue polypeptide: Alkaline protease 1 (403 aa).

The first 21 residues, 1–21 (MHSFKRSLLLLGALLPAVFGA), serve as a signal peptide directing secretion. The propeptide occupies 22–124 (PVEPRRAAEK…QIWYIDALTS (103 aa)). In terms of domain architecture, Inhibitor I9 spans 35-119 (KYIVTFKSGL…HVEEDQIWYI (85 aa)). A Peptidase S8 domain is found at 129–403 (PWGLGAISHK…NLLAYNGADE (275 aa)). Residues aspartate 161 and histidine 192 each act as charge relay system in the active site. Asparagine 252 carries an N-linked (GlcNAc...) asparagine glycan. The active-site Charge relay system is serine 348.

Belongs to the peptidase S8 family.

The protein resides in the secreted. The catalysed reaction is Hydrolysis of proteins with broad specificity, and of Bz-Arg-OEt &gt; Ac-Tyr-OEt. Does not hydrolyze peptide amides.. Secreted alkaline protease that allows assimilation of proteinaceous substrates. This is Alkaline protease 1 (alp1) from Emericella nidulans (strain FGSC A4 / ATCC 38163 / CBS 112.46 / NRRL 194 / M139) (Aspergillus nidulans).